The sequence spans 211 residues: Transcription factor bHLH150 (211 aa).

Over residues 1 to 15 (MSSEQGNGSNPSTSP) the composition is skewed to polar residues. Positions 1 to 23 (MSSEQGNGSNPSTSPEVEGTKTI) are disordered. The 50-residue stretch at 135 to 184 (AIRGSGGSGRRRKLSAVGNRVRVLGGLVPGCRRTALPELLDETADYIAAL) folds into the bHLH domain.

As to quaternary structure, homodimer. Interacts with PRE3 and ASK7. Post-translationally, phosphorylated by ASK7.

The protein resides in the nucleus. Its function is as follows. Atypical bHLH transcription factor probably unable to bind DNA. Negatively regulates brassinosteroid signaling. In Arabidopsis thaliana (Mouse-ear cress), this protein is Transcription factor bHLH150 (BHLH150).